Consider the following 75-residue polypeptide: UPF0270 protein PSPTO_1630 (75 aa).

Belongs to the UPF0270 family.

The sequence is that of UPF0270 protein PSPTO_1630 from Pseudomonas syringae pv. tomato (strain ATCC BAA-871 / DC3000).